The primary structure comprises 418 residues: L-rhamnose isomerase (418 aa).

Mn(2+)-binding residues include H262, D294, and D296.

Belongs to the rhamnose isomerase family. Homotetramer. It depends on Mn(2+) as a cofactor.

It is found in the cytoplasm. The enzyme catalyses L-rhamnopyranose = L-rhamnulose. Its pathway is carbohydrate degradation; L-rhamnose degradation; glycerone phosphate from L-rhamnose: step 1/3. In terms of biological role, catalyzes the interconversion of L-rhamnose and L-rhamnulose. This chain is L-rhamnose isomerase, found in Yersinia pestis bv. Antiqua (strain Antiqua).